Consider the following 92-residue polypeptide: MGCCGCGSCGCSGGCGGGCGGGCGGGCGSCTTCRCYRVGCCSSCCPCCRGCCGGCCSTPVICCCRRTCSSCGCGCGKGCCQQKSCCQKQCCC.

Residues 4 to 72 (CGCGSCGCSG…CCRRTCSSCG (69 aa)) are 11 X 2 AA repeats of CG.

The protein belongs to the KRTAP type 28 family.

Its function is as follows. In the hair cortex, hair keratin intermediate filaments are embedded in an interfilamentous matrix, consisting of hair keratin-associated proteins (KRTAP), which are essential for the formation of a rigid and resistant hair shaft through their extensive disulfide bond cross-linking with abundant cysteine residues of hair keratins. The matrix proteins include the high-sulfur and high-glycine-tyrosine keratins. The protein is Small cysteine and glycine repeat-containing protein 9 of Homo sapiens (Human).